The following is a 366-amino-acid chain: Endophilin-B1 (366 aa).

The membrane-binding amphipathic helix stretch occupies residues 1–30 (MNIMDFNMKKLAADAGTFLSRAVQFTEEKL). The segment at 1-37 (MNIMDFNMKKLAADAGTFLSRAVQFTEEKLGQAEKTE) is required for membrane binding. The BAR domain occupies 27-261 (EEKLGQAEKT…LGSFPSTFLS (235 aa)). Coiled coils occupy residues 34–54 (EKTE…CTKQ) and 160–185 (KERK…AKVA). One can recognise an SH3 domain in the interval 306-366 (SGSRKARVLY…VPITYLELLN (61 aa)).

This sequence belongs to the endophilin family. Homodimer, and heterodimer with SH3GLB2. Binds BAX. Binds DNM1, HTT, AMPH, BIN1 and ARFGAP1.

The protein localises to the cytoplasm. It localises to the golgi apparatus membrane. Its subcellular location is the mitochondrion outer membrane. Its function is as follows. May be required for normal outer mitochondrial membrane dynamics. Required for coatomer-mediated retrograde transport in certain cells. May recruit other proteins to membranes with high curvature. May promote membrane fusion. In Gallus gallus (Chicken), this protein is Endophilin-B1.